Reading from the N-terminus, the 456-residue chain is Probable glycine dehydrogenase (decarboxylating) subunit 1 (456 aa).

It belongs to the GcvP family. N-terminal subunit subfamily. As to quaternary structure, the glycine cleavage system is composed of four proteins: P, T, L and H. In this organism, the P 'protein' is a heterodimer of two subunits.

It catalyses the reaction N(6)-[(R)-lipoyl]-L-lysyl-[glycine-cleavage complex H protein] + glycine + H(+) = N(6)-[(R)-S(8)-aminomethyldihydrolipoyl]-L-lysyl-[glycine-cleavage complex H protein] + CO2. In terms of biological role, the glycine cleavage system catalyzes the degradation of glycine. The P protein binds the alpha-amino group of glycine through its pyridoxal phosphate cofactor; CO(2) is released and the remaining methylamine moiety is then transferred to the lipoamide cofactor of the H protein. The polypeptide is Probable glycine dehydrogenase (decarboxylating) subunit 1 (Legionella pneumophila (strain Corby)).